A 2014-amino-acid chain; its full sequence is AP-1 accessory protein LAA1 (2014 aa).

In terms of assembly, interacts with the clathrin-associated adapter complex AP-1. Interacts directly with LAA2.

The protein localises to the golgi apparatus. It localises to the cytoplasmic vesicle. Its subcellular location is the clathrin-coated vesicle. Its function is as follows. Involved in localization of clathrin adapter protein complex-1 (AP-1) and subsequent AP-1-mediated clathrin-coated vesicle cargo loading. In complex with LAA2, cooperates with the small GTPase ARF1 and the phosphatidyl-inositol-4-phosphate (PI4P) synthesis to confer temporal specificity to AP-1 recruitment. The sequence is that of AP-1 accessory protein LAA1 from Saccharomyces cerevisiae (strain ATCC 204508 / S288c) (Baker's yeast).